The chain runs to 269 residues: Meiotic drive suppressor wtf5 (269 aa).

Residues 1–65 are disordered; that stretch reads MKNNYTSLKS…NTHRENHSYG (65 aa). The span at 19–30 shows a compositional bias: basic and acidic residues; the sequence is KTDHEIDLEKGP. The next 3 membrane-spanning stretches (helical) occupy residues 73 to 95, 110 to 132, and 206 to 228; these read LLII…VCYL, WTLF…YFYE, and WGLK…VFIA.

This sequence belongs to the WTF family. In terms of assembly, homomer. Interacts with other proteins that exhibit high sequence similarity.

The protein resides in the spore membrane. Its subcellular location is the vacuole membrane. Functionally, acts as a suppressor component of the dual wtf meiotic drive system, and can suppress but not confer meiotic drive by compatible poisons. Wtf meiotic drive systems promote unequal transmission of alleles from the parental zygote to progeny spores by encoding a poison and an antidote from the same locus; the poison is trans-acting and forms toxic aggregates in all spores within an ascus, wherease the antidote is spore-specific and targets aggregates for degradation by the vacuole. Meiotic drive by wtf systems therefore lead to poisoning of all progeny that do not inherit the dual poison/antidote allele, or express a compatible antidote. In Schizosaccharomyces pombe (strain 972 / ATCC 24843) (Fission yeast), this protein is Meiotic drive suppressor wtf5.